The following is a 532-amino-acid chain: Pre-piRNA 3'-exonuclease trimmer (532 aa).

Positions 28, 30, 270, and 365 each coordinate Mg(2+). Residues 503-523 traverse the membrane as a helical segment; it reads AGRFAIWSGSIVTGGLALYLI.

It belongs to the CAF1 family. In terms of assembly, interacts with Papi/Tdrkh; interaction takes place on the mitochondrial surface and recruits PNLDC1/trimmer to PIWI-bound pre-piRNAs. Requires Mg(2+) as cofactor.

The protein resides in the mitochondrion outer membrane. In terms of biological role, 3'-5' exonuclease that specifically cleaves precursor piRNAs (pre-piRNAs) at their 3' ends. Trims pre-piRNAs to their mature size, a process required for piRNAs maturation and stabilization, and subsequent pre-piRNAs 2'-O-methylation. The piRNA metabolic process mediates the repression of transposable elements during meiosis by forming complexes composed of piRNAs and Piwi proteins and govern the methylation and subsequent repression of transposons. This chain is Pre-piRNA 3'-exonuclease trimmer, found in Bombyx mori (Silk moth).